Reading from the N-terminus, the 475-residue chain is Ribulose bisphosphate carboxylase large chain (475 aa).

The propeptide occupies 1–2; that stretch reads MS. N-acetylproline is present on Pro-3. An N6,N6,N6-trimethyllysine modification is found at Lys-14. Asn-123 and Thr-173 together coordinate substrate. The active-site Proton acceptor is the Lys-175. Residue Lys-177 coordinates substrate. Positions 201, 203, and 204 each coordinate Mg(2+). Lys-201 carries the N6-carboxylysine modification. His-294 acts as the Proton acceptor in catalysis. Residues Arg-295, His-327, and Ser-379 each coordinate substrate.

The protein belongs to the RuBisCO large chain family. Type I subfamily. In terms of assembly, heterohexadecamer of 8 large chains and 8 small chains. It depends on Mg(2+) as a cofactor.

It localises to the plastid. The enzyme catalyses 2 (2R)-3-phosphoglycerate + 2 H(+) = D-ribulose 1,5-bisphosphate + CO2 + H2O. It carries out the reaction D-ribulose 1,5-bisphosphate + O2 = 2-phosphoglycolate + (2R)-3-phosphoglycerate + 2 H(+). Functionally, ruBisCO catalyzes two reactions: the carboxylation of D-ribulose 1,5-bisphosphate, the primary event in carbon dioxide fixation, as well as the oxidative fragmentation of the pentose substrate in the photorespiration process. Both reactions occur simultaneously and in competition at the same active site. This Aneura mirabilis (Parasitic liverwort) protein is Ribulose bisphosphate carboxylase large chain.